The primary structure comprises 258 residues: Thiazole synthase (258 aa).

Residue Lys-98 is the Schiff-base intermediate with DXP of the active site. 1-deoxy-D-xylulose 5-phosphate contacts are provided by residues Gly-159, 185-186 (AG), and 207-208 (NT).

It belongs to the ThiG family. Homotetramer. Forms heterodimers with either ThiH or ThiS.

The protein localises to the cytoplasm. It catalyses the reaction [ThiS sulfur-carrier protein]-C-terminal-Gly-aminoethanethioate + 2-iminoacetate + 1-deoxy-D-xylulose 5-phosphate = [ThiS sulfur-carrier protein]-C-terminal Gly-Gly + 2-[(2R,5Z)-2-carboxy-4-methylthiazol-5(2H)-ylidene]ethyl phosphate + 2 H2O + H(+). It participates in cofactor biosynthesis; thiamine diphosphate biosynthesis. Functionally, catalyzes the rearrangement of 1-deoxy-D-xylulose 5-phosphate (DXP) to produce the thiazole phosphate moiety of thiamine. Sulfur is provided by the thiocarboxylate moiety of the carrier protein ThiS. In vitro, sulfur can be provided by H(2)S. This is Thiazole synthase from Cytophaga hutchinsonii (strain ATCC 33406 / DSM 1761 / CIP 103989 / NBRC 15051 / NCIMB 9469 / D465).